Reading from the N-terminus, the 213-residue chain is Immunoglobulin lambda-like polypeptide 1 (213 aa).

A signal peptide spans 1 to 37; it reads MRPGTGQGGLEAPGEPGPNLRQRWPLLLLGLAVVTHG. The j region stretch occupies residues 97–108; sequence VFGSGTQLTVLS. Residues 109–213 form a c region region; that stretch reads QPKATPSVTL…EKTVAPAECS (105 aa). In terms of domain architecture, Ig-like C1-type spans 114 to 208; it reads PSVTLFPPSS…EGSTVEKTVA (95 aa). Cys-135 and Cys-194 are disulfide-bonded.

In terms of assembly, associates non-covalently with VPREB1. Interacts with SYNV1/HRD1 (via N-terminus); this interaction leads to increased IGLL1 ubiquitination and degradation in pre-B cells, possibly through a lysosomal, not proteasomal, pathway. As to expression, expressed only in pre-B-cells and a special B-cell line (which is surface Ig negative).

It is found in the endoplasmic reticulum. Its subcellular location is the secreted. Critical for B-cell development. This is Immunoglobulin lambda-like polypeptide 1 (IGLL1) from Homo sapiens (Human).